A 712-amino-acid chain; its full sequence is MTSDEKSATRDIYDPNTLPDYDREFIDPDDLRQFEKALNAPEAAPLVALNDWRPVNQRVRKSRRTKPRRSKDETREGVLYTVLKWPFLFTVFAWITVLGFAYTLTRLYIFLYEQFVTWRGKRERLRKELSMQTNYQDWLKAAQALDTYLGNLKWKETDEYAYYDHLTINKVVAQLKQTRKAAETEMQNGRSGLSDPPAVEELCFLLEACVKNNFAGVENPRLYSETYSGTKDLVQEYIDEVHSCIRLVLDSKQISNEDKYQFFKHLDTNFGRTALCLSGGATFAYYHFGVIRALLDNDVLPEIITGTSGGALVAALVATRTDEELKQLLVPALAHRIRACHEGFTTWVRRWWRTGARFDTLDWARQCSWFCRGSTTFREAYERTGRILNVSCVPSDPHSPTILANYLTSPDCVIWSAVLASAAVPGILNPVVLMTKKRDGTLAPYSFGHKWKDGSLRTDIPIKALNLHFNVNFTIVSQVNPHINLFFFNSRGSVGRPVTHRKGRGWRGGFLGSAIEQYIKLDMNKWLRVLRHLELLPRPLGQDWSEIWLQKFSGTITIWPKSIPSDFYHILSDPSPERLARMLHVGKQSAFPKIQFIKNRLKIENAIMQGLQQCSSGGGRVMSPILSRRRQDRAEEHADRMVERLDQSFPERQSDYKDESHYTEVSDSLSATSSRPHTPDARRSSMFEEMRRQSAVFFDDSDMYADEDAVTT.

Residues 1-13 (MTSDEKSATRDIY) show a composition bias toward basic and acidic residues. The interval 1-21 (MTSDEKSATRDIYDPNTLPDY) is disordered. Residues 85-105 (WPFLFTVFAWITVLGFAYTLT) traverse the membrane as a helical segment. A PNPLA domain is found at 275 to 466 (LCLSGGATFA…RTDIPIKALN (192 aa)). Residues 306-310 (GTSGG) carry the GXSXG motif. Residue Ser308 is the Nucleophile of the active site. The Proton acceptor role is filled by Asp453. Positions 628–687 (RRRQDRAEEHADRMVERLDQSFPERQSDYKDESHYTEVSDSLSATSSRPHTPDARRSSMF) are disordered. Basic and acidic residues-rich tracts occupy residues 632-646 (DRAE…ERLD) and 652-664 (RQSD…HYTE). Over residues 665–676 (VSDSLSATSSRP) the composition is skewed to polar residues. The segment covering 677–687 (HTPDARRSSMF) has biased composition (basic and acidic residues).

This sequence belongs to the PLPL family.

It is found in the membrane. In terms of biological role, probable lipid hydrolase. The sequence is that of Patatin-like phospholipase domain-containing protein NFIA_019760 from Neosartorya fischeri (strain ATCC 1020 / DSM 3700 / CBS 544.65 / FGSC A1164 / JCM 1740 / NRRL 181 / WB 181) (Aspergillus fischerianus).